A 135-amino-acid chain; its full sequence is FK506-binding protein 2 (135 aa).

Residues 1-17 (MLLKSLFLLFLTAIAFA) form the signal peptide. In terms of domain architecture, PPIase FKBP-type spans 40-127 (GDLISVHYEG…VFVAELVDIA (88 aa)). The short motif at 132 to 135 (HDEL) is the Prevents secretion from ER element.

Belongs to the FKBP-type PPIase family. FKBP2 subfamily.

The protein localises to the endoplasmic reticulum. The catalysed reaction is [protein]-peptidylproline (omega=180) = [protein]-peptidylproline (omega=0). Its activity is regulated as follows. Inhibited by both FK506 and rapamycin. Functionally, PPIases accelerate the folding of proteins. It catalyzes the cis-trans isomerization of proline imidic peptide bonds in oligopeptides. The protein is FK506-binding protein 2 (FPR2) of Debaryomyces hansenii (strain ATCC 36239 / CBS 767 / BCRC 21394 / JCM 1990 / NBRC 0083 / IGC 2968) (Yeast).